The sequence spans 123 residues: MIQEQTMLDVADNSGARSVMCIKVLGGSHRRYAAIGDIIKVTVKEAIPRGKVKKGDVLKAVVVRTKKGVRRPDGSVIRFDGNACVILNNNTEQPIGTRIFGPVTRELRSEKFMKIISLAPEVL.

Belongs to the universal ribosomal protein uL14 family. In terms of assembly, part of the 50S ribosomal subunit. Forms a cluster with proteins L3 and L19. In the 70S ribosome, L14 and L19 interact and together make contacts with the 16S rRNA in bridges B5 and B8.

Binds to 23S rRNA. Forms part of two intersubunit bridges in the 70S ribosome. This is Large ribosomal subunit protein uL14 from Actinobacillus pleuropneumoniae serotype 7 (strain AP76).